The following is a 115-amino-acid chain: Large ribosomal subunit protein bL19 (115 aa).

The protein belongs to the bacterial ribosomal protein bL19 family.

Its function is as follows. This protein is located at the 30S-50S ribosomal subunit interface and may play a role in the structure and function of the aminoacyl-tRNA binding site. The protein is Large ribosomal subunit protein bL19 of Bacillus licheniformis (strain ATCC 14580 / DSM 13 / JCM 2505 / CCUG 7422 / NBRC 12200 / NCIMB 9375 / NCTC 10341 / NRRL NRS-1264 / Gibson 46).